A 29-amino-acid polypeptide reads, in one-letter code: Cyclotide cter-L (29 aa).

A cross-link (cyclopeptide (His-Asp)) is located at residues 1 to 29 (HEPCGESCVFIPCITTVVGCSCKNKVCYD). 3 disulfides stabilise this stretch: C4/C20, C8/C22, and C13/C27.

Contains 3 disulfide bonds. In terms of processing, this is a cyclic peptide.

Functionally, probably participates in a plant defense mechanism. This chain is Cyclotide cter-L, found in Clitoria ternatea (Butterfly pea).